Consider the following 106-residue polypeptide: uncharacterized protein (106 aa).

An N-terminal signal peptide occupies residues 1-31; the sequence is MKKKTKIILSLLAALIVILIVLPVLSPVVFT.

This is an uncharacterized protein from Bacillus subtilis (strain 168).